The following is a 180-amino-acid chain: UPF0227 protein YcfP (180 aa).

It belongs to the UPF0227 family.

This Salmonella paratyphi A (strain ATCC 9150 / SARB42) protein is UPF0227 protein YcfP.